A 766-amino-acid polypeptide reads, in one-letter code: Isocitrate lyase 2 (766 aa).

106-108 (GGW) contacts substrate. Residue Asp177 coordinates Mg(2+). Cys215 acts as the Proton acceptor in catalysis. Substrate contacts are provided by residues 216 to 217 (GH), Arg252, 487 to 491 (NLSPS), and Thr522.

This sequence belongs to the isocitrate lyase/PEP mutase superfamily. Isocitrate lyase family. Mg(2+) is required as a cofactor.

It catalyses the reaction D-threo-isocitrate = glyoxylate + succinate. It participates in carbohydrate metabolism; glyoxylate cycle; (S)-malate from isocitrate: step 1/2. Its function is as follows. Involved in the persistence and virulence of Mycobacterium. Catalyzes the reversible formation of succinate and glyoxylate from isocitrate, a key step of the glyoxylate cycle, which operates as an anaplerotic route for replenishing the tricarboxylic acid cycle during growth on fatty acid substrates. This is Isocitrate lyase 2 (aceA) from Mycobacterium bovis (strain ATCC BAA-935 / AF2122/97).